The primary structure comprises 126 residues: Nascent polypeptide-associated complex protein (126 aa).

The region spanning 10–77 (PRMMKQMQKM…AKKVAKEEEK (68 aa)) is the NAC-A/B domain.

The protein belongs to the NAC-alpha family. As to quaternary structure, homodimer. Interacts with the ribosome. Binds ribosomal RNA.

Contacts the emerging nascent chain on the ribosome. The chain is Nascent polypeptide-associated complex protein from Methanococcus maripaludis (strain DSM 14266 / JCM 13030 / NBRC 101832 / S2 / LL).